We begin with the raw amino-acid sequence, 463 residues long: Spermidine/putrescine import ATP-binding protein PotA (463 aa).

The ABC transporter domain occupies 10–240; it reads IEVSHVSKFF…PINSFVADFI (231 aa). Residue 42-49 participates in ATP binding; sequence GPSGCGKT.

It belongs to the ABC transporter superfamily. Spermidine/putrescine importer (TC 3.A.1.11.1) family. As to quaternary structure, the complex is composed of two ATP-binding proteins (PotA), two transmembrane proteins (PotB and PotC) and a solute-binding protein (PotD).

The protein localises to the cell inner membrane. It catalyses the reaction ATP + H2O + polyamine-[polyamine-binding protein]Side 1 = ADP + phosphate + polyamineSide 2 + [polyamine-binding protein]Side 1.. Part of the ABC transporter complex PotABCD involved in spermidine/putrescine import. Responsible for energy coupling to the transport system. The protein is Spermidine/putrescine import ATP-binding protein PotA of Bacteroides thetaiotaomicron (strain ATCC 29148 / DSM 2079 / JCM 5827 / CCUG 10774 / NCTC 10582 / VPI-5482 / E50).